Consider the following 106-residue polypeptide: ATP-dependent Clp protease adapter protein ClpS (106 aa).

Belongs to the ClpS family. Binds to the N-terminal domain of the chaperone ClpA.

Its function is as follows. Involved in the modulation of the specificity of the ClpAP-mediated ATP-dependent protein degradation. The protein is ATP-dependent Clp protease adapter protein ClpS of Aliivibrio fischeri (strain ATCC 700601 / ES114) (Vibrio fischeri).